The primary structure comprises 50 residues: Cytochrome c-555 (50 aa).

Heme contacts are provided by C7, C10, H11, and M25.

Binds 1 heme group per subunit.

Its subcellular location is the cell membrane. This is Cytochrome c-555 from Schinkia azotoformans (Bacillus azotoformans).